A 197-amino-acid polypeptide reads, in one-letter code: MLPPIVLASQSPARRQLLKAAGIPFRVQPSYFDESQIKSSDPVELVQKLASAKAEVVAAQQREPVLVVGADSVLYLDGEILGKPPNALEAERRLRQMRGEVGELYTGHALIDTKQNRRLTHYAVTRVFFAKPSDEEIRAYVATGEPLNCAGCFAIDGRGSLFVERIEGCPGNVIGLSLPLLRRMMQELGYSLTDAWS.

D71 functions as the Proton acceptor in the catalytic mechanism.

The protein belongs to the Maf family. It depends on a divalent metal cation as a cofactor.

Its subcellular location is the cytoplasm. It carries out the reaction a ribonucleoside 5'-triphosphate + H2O = a ribonucleoside 5'-phosphate + diphosphate + H(+). It catalyses the reaction a 2'-deoxyribonucleoside 5'-triphosphate + H2O = a 2'-deoxyribonucleoside 5'-phosphate + diphosphate + H(+). Functionally, nucleoside triphosphate pyrophosphatase. May have a dual role in cell division arrest and in preventing the incorporation of modified nucleotides into cellular nucleic acids. This chain is Nucleoside triphosphate pyrophosphatase, found in Synechococcus sp. (strain JA-2-3B'a(2-13)) (Cyanobacteria bacterium Yellowstone B-Prime).